The chain runs to 111 residues: Flagellar hook-basal body complex protein FliE (111 aa).

The protein belongs to the FliE family.

The protein localises to the bacterial flagellum basal body. The sequence is that of Flagellar hook-basal body complex protein FliE from Sinorhizobium fredii (strain NBRC 101917 / NGR234).